The chain runs to 680 residues: MSDDPGQMLLIYDDPSDQRSLSLDDASSTEESPDDNNLSLEAVHNAIPYLGQIFLTHDTAYEFYSTFAKRCGFSIRRHRTEGKDGVGKGLTRRYFVCHRAGNTPIKTLSEGKPQRNRRSSRCGCQAYLRISKLTELGSTEWRVTGFANHHNHELLEPNQVRFLPAYRSISDADKSRILMFSKTGISVQQMMRLLELEKCVEPGFLPFTEKDVRNLLQSFKKLDPEDENIDFLRMCQSIKEKDPNFKFEFTLDANDKLENIAWSYASSIQSYELFGDAVVFDTTHRLSAVEMPLGIWVGVNNYGVPCFFGCVLLRDENLRSWSWALQAFTGFMNGKAPQTILTDHNMCLKEAIAGEMPATKHALCIWMVVGKFPSWFNAGLGERYNDWKAEFYRLYHLESVEEFELGWRDMVNSFGLHTNRHINNLYASRSLWSLPYLRSHFLAGMTLTGRSKAINAFIQRFLSAQTRLAHFVEQVAVVVDFKDQATEQQTMQQNLQNISLKTGAPMESHAASVLTPFAFSKLQEQLVLAAHYASFQMDEGYLVRHHTKLDGGRKVYWVPQEGIISCSCQLFEFSGFLCRHALRVLSTGNCFQVPDRYLPLRWRRISTSFSKTFRSNAEDHGERVQLLQNLVSTLVSESAKSKERLDIATEQTSILLSRIREQPVSSLAIRDISSSVQRNF.

The tract at residues 1–36 (MSDDPGQMLLIYDDPSDQRSLSLDDASSTEESPDDN) is disordered. Residues 62–156 (EFYSTFAKRC…ANHHNHELLE (95 aa)) enclose the FAR1 domain. One can recognise an MULE domain in the interval 277-373 (AVVFDTTHRL…CIWMVVGKFP (97 aa)). Residues 556–589 (YWVPQEGIISCSCQLFEFSGFLCRHALRVLSTGN) form an SWIM-type zinc finger.

This sequence belongs to the FHY3/FAR1 family. Expressed in hypocotyls, rosette and cauline leaves, inflorescences stems, flowers and siliques.

Its subcellular location is the nucleus. Its function is as follows. Putative transcription activator involved in regulating light control of development. The chain is Protein FAR1-RELATED SEQUENCE 11 (FRS11) from Arabidopsis thaliana (Mouse-ear cress).